We begin with the raw amino-acid sequence, 577 residues long: Proline--tRNA ligase (577 aa).

The protein belongs to the class-II aminoacyl-tRNA synthetase family. ProS type 1 subfamily. Homodimer.

The protein resides in the cytoplasm. The catalysed reaction is tRNA(Pro) + L-proline + ATP = L-prolyl-tRNA(Pro) + AMP + diphosphate. Catalyzes the attachment of proline to tRNA(Pro) in a two-step reaction: proline is first activated by ATP to form Pro-AMP and then transferred to the acceptor end of tRNA(Pro). As ProRS can inadvertently accommodate and process non-cognate amino acids such as alanine and cysteine, to avoid such errors it has two additional distinct editing activities against alanine. One activity is designated as 'pretransfer' editing and involves the tRNA(Pro)-independent hydrolysis of activated Ala-AMP. The other activity is designated 'posttransfer' editing and involves deacylation of mischarged Ala-tRNA(Pro). The misacylated Cys-tRNA(Pro) is not edited by ProRS. The sequence is that of Proline--tRNA ligase from Chlamydia abortus (strain DSM 27085 / S26/3) (Chlamydophila abortus).